Reading from the N-terminus, the 205-residue chain is Probable anaerobic dimethyl sulfoxide reductase chain YnfG (205 aa).

4Fe-4S ferredoxin-type domains lie at 5–33 (YGFF…LGPE), 59–89 (FAYY…KRED), and 90–119 (GFVV…YNAE). 16 residues coordinate [4Fe-4S] cluster: C14, C17, C20, C24, C67, C70, C75, C79, C99, C102, C105, C109, C126, C129, C141, and C145. The tract at residues 183–205 (IKPNANSRPTGDTTGYLANPEEV) is disordered. A compositionally biased stretch (polar residues) spans 186–195 (NANSRPTGDT).

In terms of assembly, the complex consists of three subunits: YnfF, the reductase; YnfG, an electron transfer protein, and YnfH, a membrane anchor protein. The cofactor is [4Fe-4S] cluster.

Functionally, electron transfer subunit of the terminal reductase during anaerobic growth on various sulfoxide and N-oxide compounds. The polypeptide is Probable anaerobic dimethyl sulfoxide reductase chain YnfG (ynfG) (Escherichia coli O6:H1 (strain CFT073 / ATCC 700928 / UPEC)).